A 264-amino-acid chain; its full sequence is ORC1-type DNA replication protein 2 (264 aa).

ATP contacts are provided by residues 73–77, Tyr220, and Arg232; that span reads TGKSL.

It belongs to the CDC6/cdc18 family.

Involved in regulation of DNA replication. The polypeptide is ORC1-type DNA replication protein 2 (orc2) (Halobacterium salinarum (strain ATCC 700922 / JCM 11081 / NRC-1) (Halobacterium halobium)).